The sequence spans 1088 residues: RNA-directed RNA polymerase (1088 aa).

In terms of domain architecture, RdRp catalytic spans 501–687 (LSYGDVTRFL…AKRYIAGGKI (187 aa)).

The protein belongs to the reoviridae RNA-directed RNA polymerase family. In terms of assembly, interacts with VP3 (Potential). Interacts with VP2; this interaction activates VP1. Interacts with NSP5; this interaction is probably necessary for the formation of functional virus factories. Interacts with NSP2; this interaction is weak. Mg(2+) serves as cofactor.

Its subcellular location is the virion. The enzyme catalyses RNA(n) + a ribonucleoside 5'-triphosphate = RNA(n+1) + diphosphate. Functionally, RNA-directed RNA polymerase that is involved in both transcription and genome replication. Together with VP3 capping enzyme, forms an enzyme complex positioned near the channels situated at each of the five-fold vertices of the core. Following infection, the outermost layer of the virus is lost, leaving a double-layered particle (DLP) made up of the core and VP6 shell. VP1 then catalyzes the transcription of fully conservative plus-strand genomic RNAs that are extruded through the DLP's channels into the cytoplasm where they function as mRNAs for translation of viral proteins. One copy of each of the viral (+)RNAs is also recruited during core assembly, together with newly synthesized polymerase complexes and VP2. The polymerase of these novo-formed particles catalyzes the synthesis of complementary minus-strands leading to dsRNA formation. To do so, the polymerase specifically recognizes and binds 4 bases 5'-UGUG-3' in the conserved 3'-sequence of plus-strand RNA templates. VP2 presumably activates the autoinhibited VP1-RNA complex to coordinate packaging and genome replication. Once dsRNA synthesis is complete, the polymerase switches to the transcriptional mode, thus providing secondary transcription. The protein is RNA-directed RNA polymerase of Homo sapiens (Human).